The sequence spans 281 residues: 2-dehydro-3-deoxyphosphooctonate aldolase (281 aa).

The protein belongs to the KdsA family.

It is found in the cytoplasm. It catalyses the reaction D-arabinose 5-phosphate + phosphoenolpyruvate + H2O = 3-deoxy-alpha-D-manno-2-octulosonate-8-phosphate + phosphate. It participates in carbohydrate biosynthesis; 3-deoxy-D-manno-octulosonate biosynthesis; 3-deoxy-D-manno-octulosonate from D-ribulose 5-phosphate: step 2/3. It functions in the pathway bacterial outer membrane biogenesis; lipopolysaccharide biosynthesis. This is 2-dehydro-3-deoxyphosphooctonate aldolase from Janthinobacterium sp. (strain Marseille) (Minibacterium massiliensis).